Reading from the N-terminus, the 192-residue chain is Acireductone dioxygenase 2 (192 aa).

His99, His101, Glu105, and His144 together coordinate Fe(2+). Ni(2+)-binding residues include His99, His101, Glu105, and His144.

It belongs to the acireductone dioxygenase (ARD) family. Requires Fe(2+) as cofactor. Ni(2+) is required as a cofactor.

It is found in the cytoplasm. Its subcellular location is the nucleus. It carries out the reaction 1,2-dihydroxy-5-(methylsulfanyl)pent-1-en-3-one + O2 = 4-methylsulfanyl-2-oxobutanoate + formate + 2 H(+). The enzyme catalyses 1,2-dihydroxy-5-(methylsulfanyl)pent-1-en-3-one + O2 = 3-(methylsulfanyl)propanoate + CO + formate + 2 H(+). Its pathway is amino-acid biosynthesis; L-methionine biosynthesis via salvage pathway; L-methionine from S-methyl-5-thio-alpha-D-ribose 1-phosphate: step 5/6. Catalyzes 2 different reactions between oxygen and the acireductone 1,2-dihydroxy-3-keto-5-methylthiopentene (DHK-MTPene) depending upon the metal bound in the active site. Fe-containing acireductone dioxygenase (Fe-ARD) produces formate and 2-keto-4-methylthiobutyrate (KMTB), the alpha-ketoacid precursor of methionine in the methionine recycle pathway. Ni-containing acireductone dioxygenase (Ni-ARD) produces methylthiopropionate, carbon monoxide and formate, and does not lie on the methionine recycle pathway. This is Acireductone dioxygenase 2 (ARD2) from Arabidopsis thaliana (Mouse-ear cress).